Reading from the N-terminus, the 408-residue chain is MSSVFETLKERGYIAQLTHEEKIKELLEKEKITFYIGFDPTADSLHVGHFLQMMVMAHMQKAGHRPIALIGGGTAMVGDPTGRTDMRKMMTREEIKHNADCFKKQLSKFIEFGEGKAIMVDNADWLLDLNYIEFLRDIGVHFSVNRMLTAECFKSRLERGLSFIEFNYMLMQSYDFLKLYKEYGCIMQLGGDDQWSNILGGIDLIRRKEGKEVYGMTFTLLTTSEGKKMGKTEKGALWLDANKTSPYEFYQYWRNIHDADVIKCLKLLTFVPMEEIEEYAKLKDQEINIAKKRLAFEVTKLIHGEEEALNAQKTAEALFEKGASTDNMPTTEVASGELSNGINIIDLLLKTKLIPSKGEGRRLIEQGGISVNDVRVEGFDRLVTMDDFNNGELIIKKGKKTYHRVKLV.

Tyr-35 is an L-tyrosine binding site. A 'HIGH' region motif is present at residues 40-49 (PTADSLHVGH). L-tyrosine-binding residues include Tyr-168 and Gln-172. A 'KMSKS' region motif is present at residues 228–232 (KMGKT). Residue Lys-231 participates in ATP binding. Positions 342–407 (INIIDLLLKT…GKKTYHRVKL (66 aa)) constitute an S4 RNA-binding domain.

Belongs to the class-I aminoacyl-tRNA synthetase family. TyrS type 1 subfamily. As to quaternary structure, homodimer.

The protein resides in the cytoplasm. It catalyses the reaction tRNA(Tyr) + L-tyrosine + ATP = L-tyrosyl-tRNA(Tyr) + AMP + diphosphate + H(+). Its function is as follows. Catalyzes the attachment of tyrosine to tRNA(Tyr) in a two-step reaction: tyrosine is first activated by ATP to form Tyr-AMP and then transferred to the acceptor end of tRNA(Tyr). The polypeptide is Tyrosine--tRNA ligase (Acetivibrio thermocellus (strain ATCC 27405 / DSM 1237 / JCM 9322 / NBRC 103400 / NCIMB 10682 / NRRL B-4536 / VPI 7372) (Clostridium thermocellum)).